A 74-amino-acid chain; its full sequence is Small heat shock protein hspG10 (74 aa).

One can recognise a sHSP domain in the interval 31 to 74; that stretch reads KTIIDILPSMDVTMTNDKLIIETELAGISKDHIEIDIKDSILTI.

Belongs to the small heat shock protein (HSP20) family.

This is Small heat shock protein hspG10 (hspG10) from Dictyostelium discoideum (Social amoeba).